The following is a 341-amino-acid chain: Peroxisomal membrane protein PEX14 (341 aa).

Ser-2 bears the N-acetylserine mark. An SH3-binding motif is present at residues 86–94; the sequence is PPTLPHRDW. The disordered stretch occupies residues 276 to 341; it reads MQEESDKEKE…QNGQVEDSIP (66 aa). Residues 279–295 are compositionally biased toward basic and acidic residues; the sequence is ESDKEKENGSDANKDDN. The segment covering 308 to 341 has biased composition (polar residues); the sequence is IDSNASIPEWQKNTAANEISVPDWQNGQVEDSIP. At Ser-313 the chain carries Phosphoserine.

This sequence belongs to the peroxin-14 family. In terms of assembly, interacts with PEX13 (via SH3 domain); forming the PEX13-PEX14 docking complex. Interacts with PEX5 (via WxxxF/Y motifs). Interacts with PEX7. Interacts with PEX9.

It localises to the peroxisome membrane. Component of the PEX13-PEX14 docking complex, a translocon channel that specifically mediates the import of peroxisomal cargo proteins bound to PEX5 or PEX21 receptors. The PEX13-PEX14 docking complex forms a large import pore which can be opened to a diameter of about 9 nm. Mechanistically, PEX5 (or PEX21) receptor along with cargo proteins associates with the PEX14 subunit of the PEX13-PEX14 docking complex in the cytosol, leading to the insertion of the receptor into the organelle membrane with the concomitant translocation of the cargo into the peroxisome matrix. The chain is Peroxisomal membrane protein PEX14 from Saccharomyces cerevisiae (strain ATCC 204508 / S288c) (Baker's yeast).